Reading from the N-terminus, the 177-residue chain is Alpha-crystallin A chain (177 aa).

Position 1 is an N-acetylmethionine (Met1). The region spanning 52-162 (VFRNFLDSGI…NWQDRPIPVS (111 aa)) is the sHSP domain. Zn(2+)-binding residues include His100 and Glu102. An intrachain disulfide couples Cys131 to Cys142. The disordered stretch occupies residues 146–177 (TRPGDDSNWQDRPIPVSREEKQGTQPEIRADP). The O-linked (GlcNAc) serine glycan is linked to Ser162. A compositionally biased stretch (basic and acidic residues) spans 162–177 (SREEKQGTQPEIRADP).

This sequence belongs to the small heat shock protein (HSP20) family. Heteropolymer composed of three CRYAA and one CRYAB subunits. Inter-subunit bridging via zinc ions enhances stability, which is crucial as there is no protein turn over in the lens. Can also form homodimers and homotetramers (dimers of dimers) which serve as the building blocks of homooligomers.

The protein localises to the cytoplasm. The protein resides in the nucleus. In terms of biological role, contributes to the transparency and refractive index of the lens. May act as a chaperone, preventing aggregation of various proteins under a wide range of stress conditions. The chain is Alpha-crystallin A chain (cryaa) from Squalus acanthias (Spiny dogfish).